The sequence spans 338 residues: Glyceraldehyde-3-phosphate dehydrogenase, cytosolic (338 aa).

Residues 13 to 14, D35, and R82 contribute to the NAD(+) site; that span reads RI. Residues 153–155, T184, 213–214, and R236 contribute to the D-glyceraldehyde 3-phosphate site; these read SCT and TG. C154 functions as the Nucleophile in the catalytic mechanism. NAD(+) is bound at residue N318.

The protein belongs to the glyceraldehyde-3-phosphate dehydrogenase family. In terms of assembly, homotetramer.

It localises to the cytoplasm. The enzyme catalyses D-glyceraldehyde 3-phosphate + phosphate + NAD(+) = (2R)-3-phospho-glyceroyl phosphate + NADH + H(+). Its pathway is carbohydrate degradation; glycolysis; pyruvate from D-glyceraldehyde 3-phosphate: step 1/5. Key enzyme in glycolysis that catalyzes the first step of the pathway by converting D-glyceraldehyde 3-phosphate (G3P) into 3-phospho-D-glyceroyl phosphate. Essential for the maintenance of cellular ATP levels and carbohydrate metabolism. The protein is Glyceraldehyde-3-phosphate dehydrogenase, cytosolic (GAPC) of Dianthus caryophyllus (Carnation).